Consider the following 78-residue polypeptide: Small ribosomal subunit protein bS18 (78 aa).

It belongs to the bacterial ribosomal protein bS18 family. Part of the 30S ribosomal subunit. Forms a tight heterodimer with protein bS6.

In terms of biological role, binds as a heterodimer with protein bS6 to the central domain of the 16S rRNA, where it helps stabilize the platform of the 30S subunit. The sequence is that of Small ribosomal subunit protein bS18 from Rhodospirillum rubrum (strain ATCC 11170 / ATH 1.1.1 / DSM 467 / LMG 4362 / NCIMB 8255 / S1).